Here is a 318-residue protein sequence, read N- to C-terminus: Olfactory receptor 51E1 (318 aa).

Residues 1–31 (MMVDPNGNESSATYFILIGLPGLEEAQFWLA) are Extracellular-facing. N-linked (GlcNAc...) asparagine glycosylation occurs at N8. The chain crosses the membrane as a helical span at residues 32-52 (FPLCSLYLIAVLGNLTIIYIV). Residues 53 to 60 (RTEHSLHE) are Cytoplasmic-facing. Residues 61 to 81 (PMYIFLCMLSGIDILISTSSM) traverse the membrane as a helical segment. Over 82 to 100 (PKMLAIFWFNSTTIQFDAC) the chain is Extracellular. N-linked (GlcNAc...) asparagine glycosylation is present at N91. Residues C100 and C182 are joined by a disulfide bond. A helical transmembrane segment spans residues 101-123 (LLQMFAIHSLSGMESTVLLAMAF). Residues 124–145 (DRYVAICHPLRHATVLTLPRVT) are Cytoplasmic-facing. A helical membrane pass occupies residues 146–166 (KIGVAAVVRGAALMAPLPVFI). At 167–198 (KQLPFCRSNILSHSYCLHQDVMKLACDDIRVN) the chain is on the extracellular side. Residues 199 to 219 (VVYGLIVIISAIGLDSLLISF) traverse the membrane as a helical segment. Topologically, residues 220–239 (SYLLILKTVLGLTREAQAKA) are cytoplasmic. Residues 240–260 (FGTCVSHVCAVFIFYVPFIGL) form a helical membrane-spanning segment. The Extracellular segment spans residues 261–275 (SMVHRFSKRRDSPLP). Residues 276-296 (VILANIYLLVPPVLNPIVYGV) traverse the membrane as a helical segment. Residues 297–318 (KTKEIRQRILRLFHVATHASEP) lie on the Cytoplasmic side of the membrane.

Belongs to the G-protein coupled receptor 1 family. Highly expressed in prostate. Very low levels may be detected in some other tissues, such as placenta, skeletal muscle, heart, ovary and testis. Up-regulated in prostate cancers.

It localises to the cell membrane. Functionally, odorant receptor. The protein is Olfactory receptor 51E1 (OR51E1) of Homo sapiens (Human).